Consider the following 333-residue polypeptide: Protein pelota homolog (333 aa).

The protein belongs to the eukaryotic release factor 1 family. Pelota subfamily. As to quaternary structure, monomer. A divalent metal cation is required as a cofactor.

It is found in the cytoplasm. May function in recognizing stalled ribosomes, interact with stem-loop structures in stalled mRNA molecules, and effect endonucleolytic cleavage of the mRNA. May play a role in the release non-functional ribosomes and degradation of damaged mRNAs. Has endoribonuclease activity. This chain is Protein pelota homolog, found in Pyrobaculum arsenaticum (strain DSM 13514 / JCM 11321 / PZ6).